We begin with the raw amino-acid sequence, 254 residues long: Small ribosomal subunit protein uS5 (254 aa).

The segment covering 1–10 (MSAPEAQQQK) has biased composition (polar residues). A disordered region spans residues 1 to 34 (MSAPEAQQQKRGGFGGRNRGRPNRRGPRNTEEKG). Position 2 is an N-acetylserine (Ser2). Arg11 is subject to Asymmetric dimethylarginine; by HMT1; alternate. Omega-N-methylarginine; by HMT1; alternate is present on Arg11. The residue at position 17 (Arg17) is an Omega-N-methylarginine; by HMT1. Over residues 18–27 (NRGRPNRRGP) the composition is skewed to basic residues. Lys33 participates in a covalent cross-link: Glycyl lysine isopeptide (Lys-Gly) (interchain with G-Cter in ubiquitin). The 64-residue stretch at 76-139 (LQDEVMNIKP…IIAKLSVIPI (64 aa)) folds into the S5 DRBM domain.

It belongs to the universal ribosomal protein uS5 family. As to quaternary structure, component of the small ribosomal subunit (SSU). Mature yeast ribosomes consist of a small (40S) and a large (60S) subunit. The 40S small subunit contains 1 molecule of ribosomal RNA (18S rRNA) and 33 different proteins (encoded by 57 genes). The large 60S subunit contains 3 rRNA molecules (25S, 5.8S and 5S rRNA) and 46 different proteins (encoded by 81 genes). Interacts with snoRNA U3. Interacts with MPP10. Component of the ribosomal small subunit (SSU) processome composed of at least 40 protein subunits and snoRNA U3. Post-translationally, N-terminally acetylated by acetyltransferase NatA.

It is found in the cytoplasm. The protein localises to the nucleus. Its subcellular location is the nucleolus. In terms of biological role, component of the ribosome, a large ribonucleoprotein complex responsible for the synthesis of proteins in the cell. The small ribosomal subunit (SSU) binds messenger RNAs (mRNAs) and translates the encoded message by selecting cognate aminoacyl-transfer RNA (tRNA) molecules. The large subunit (LSU) contains the ribosomal catalytic site termed the peptidyl transferase center (PTC), which catalyzes the formation of peptide bonds, thereby polymerizing the amino acids delivered by tRNAs into a polypeptide chain. The nascent polypeptides leave the ribosome through a tunnel in the LSU and interact with protein factors that function in enzymatic processing, targeting, and the membrane insertion of nascent chains at the exit of the ribosomal tunnel. uS5 is important for the assembly and function of the 40S ribosomal subunit. Mutations in this protein affects the control of translational fidelity. Involved in nucleolar processing of pre-18S ribosomal RNA and ribosome assembly. The protein is Small ribosomal subunit protein uS5 of Saccharomyces cerevisiae (strain ATCC 204508 / S288c) (Baker's yeast).